Reading from the N-terminus, the 105-residue chain is Dicamba O-demethylase, ferredoxin component (105 aa).

In terms of domain architecture, 2Fe-2S ferredoxin-type spans 2 to 105 (PQITVVNQSG…GIKVTIAQED (104 aa)). Residues Cys-40, Cys-46, Cys-49, and Cys-86 each coordinate [2Fe-2S] cluster.

This sequence belongs to the adrenodoxin/putidaredoxin family. Monomer. The dicamba O-demethylase multicomponent enzyme system is composed of an oxygenase component (DdmC) and an electron transfer component formed by a ferredoxin reductase (DdmA1) and a ferredoxin (DdmB). In vitro, dicamba O-demethylase assays in which DdmA2 is substituted for DdmA1 demonstrate that the two enzymes possess nearly identical activities. It depends on [2Fe-2S] cluster as a cofactor.

Component of the dicamba O-demethylase multicomponent enzyme system involved in the degradation of the herbicide dicamba. In vitro, functions as an intermediate electron transfer protein. The chain is Dicamba O-demethylase, ferredoxin component from Stenotrophomonas maltophilia (Pseudomonas maltophilia).